Consider the following 118-residue polypeptide: V-type proton ATPase subunit G 2 (118 aa).

The interval 23–90 is disordered; the sequence is ADARKRKARR…VQGMQSSQQR (68 aa). Residues 35-55 show a composition bias toward basic and acidic residues; that stretch reads QAKEEAQMEVEQYRREREQEF. Composition is skewed to polar residues over residues 56-69 and 78-89; these read QSKQQAAMGSQGNL and RRQVQGMQSSQQ.

The protein belongs to the V-ATPase G subunit family. As to quaternary structure, V-ATPase is a heteromultimeric enzyme made up of two complexes: the ATP-hydrolytic V1 complex and the proton translocation V0 complex. The V1 complex consists of three catalytic AB heterodimers that form a heterohexamer, three peripheral stalks each consisting of EG heterodimers, one central rotor including subunits D and F, and the regulatory subunits C and H. The proton translocation complex V0 consists of the proton transport subunit a, a ring of proteolipid subunits c9c'', rotary subunit d, subunits e and f, and the accessory subunits ATP6AP1/Ac45 and ATP6AP2/PRR.

Its subcellular location is the melanosome. It is found in the cytoplasmic vesicle. It localises to the clathrin-coated vesicle membrane. Its function is as follows. Subunit of the V1 complex of vacuolar(H+)-ATPase (V-ATPase), a multisubunit enzyme composed of a peripheral complex (V1) that hydrolyzes ATP and a membrane integral complex (V0) that translocates protons. V-ATPase is responsible for acidifying and maintaining the pH of intracellular compartments and in some cell types, is targeted to the plasma membrane, where it is responsible for acidifying the extracellular environment. The polypeptide is V-type proton ATPase subunit G 2 (ATP6V1G2) (Macaca mulatta (Rhesus macaque)).